A 199-amino-acid chain; its full sequence is Recombination protein RecR (199 aa).

The segment at 57–72 (CQSCRTFTEETYCPIC) adopts a C4-type zinc-finger fold. One can recognise a Toprim domain in the interval 81 to 176 (EVICVVETPA…TVSRIAHGVP (96 aa)).

Belongs to the RecR family.

Its function is as follows. May play a role in DNA repair. It seems to be involved in an RecBC-independent recombinational process of DNA repair. It may act with RecF and RecO. The sequence is that of Recombination protein RecR from Shewanella pealeana (strain ATCC 700345 / ANG-SQ1).